We begin with the raw amino-acid sequence, 82 residues long: Small ribosomal subunit protein bS18 (82 aa).

Over residues 1-10 (MTDTNQNSSR) the composition is skewed to polar residues. The tract at residues 1–21 (MTDTNQNSSRRPFHRRRKTCP) is disordered.

This sequence belongs to the bacterial ribosomal protein bS18 family. As to quaternary structure, part of the 30S ribosomal subunit. Forms a tight heterodimer with protein bS6.

Its function is as follows. Binds as a heterodimer with protein bS6 to the central domain of the 16S rRNA, where it helps stabilize the platform of the 30S subunit. The chain is Small ribosomal subunit protein bS18 from Bartonella tribocorum (strain CIP 105476 / IBS 506).